The sequence spans 80 residues: Small ribosomal subunit protein bS16 (80 aa).

The protein belongs to the bacterial ribosomal protein bS16 family.

This chain is Small ribosomal subunit protein bS16, found in Acholeplasma laidlawii (strain PG-8A).